The primary structure comprises 846 residues: Protein arginine N-methyltransferase 9 (846 aa).

TPR repeat units lie at residues 25–58 (VARS…APEL), 67–100 (QYTL…FPDD), and 101–134 (EVIC…NPDF). 2 consecutive SAM-dependent MTase PRMT-type domains span residues 137–466 (AKEN…YLRI) and 530–846 (NIPY…AVKP).

The protein belongs to the class I-like SAM-binding methyltransferase superfamily. Protein arginine N-methyltransferase family. Found in a complex with PRMT9, SF3B2 and SF3B4. Interacts with SF3B2.

The protein localises to the cytoplasm. It catalyses the reaction L-arginyl-[protein] + 2 S-adenosyl-L-methionine = N(omega),N(omega)'-dimethyl-L-arginyl-[protein] + 2 S-adenosyl-L-homocysteine + 2 H(+). Arginine methyltransferase that can both catalyze the formation of omega-N monomethylarginine (MMA) and symmetrical dimethylarginine (sDMA). Specifically mediates the symmetrical dimethylation of SF3B2. Involved in the regulation of alternative splicing of pre-mRNA. In Mus musculus (Mouse), this protein is Protein arginine N-methyltransferase 9 (Prmt9).